A 258-amino-acid polypeptide reads, in one-letter code: Sec-independent protein translocase protein TatC (258 aa).

Over 2 to 23 (SVEDTQPLITHLIELRKRLLNC) the chain is Cytoplasmic. A helical transmembrane segment spans residues 24 to 44 (IIAVIVIFLCLVYFANDIYHL). Residues 45–75 (VSAPLIKQLPQGSTMIATDVASPFFTPIKLT) are Periplasmic-facing. A helical transmembrane segment spans residues 76–96 (FMVSLILSAPVILYQVWAFIA). At 97-115 (PALYKHERRLVVPLLVSSS) the chain is on the cytoplasmic side. Residues 116–136 (LLFYIGMAFAYFVVFPLAFGF) traverse the membrane as a helical segment. The Periplasmic segment spans residues 137–156 (LANTAPEGVQVSTDIASYLS). Residues 157-177 (FVMALFMAFGVSFEVPVAIVL) traverse the membrane as a helical segment. At 178 to 192 (LCWMGITSPEDLRKK) the chain is on the cytoplasmic side. A helical transmembrane segment spans residues 193–210 (RPYVLVGAFVVGMLLTPP). Residue aspartate 211 is a topological domain, periplasmic. Residues 212-232 (VFSQTLLAIPMYCLFEIGVFF) form a helical membrane-spanning segment. At 233 to 258 (SRFYVGKGRNREEENDAEAESEKTEE) the chain is on the cytoplasmic side.

It belongs to the TatC family. The Tat system comprises two distinct complexes: a TatABC complex, containing multiple copies of TatA, TatB and TatC subunits, and a separate TatA complex, containing only TatA subunits. Substrates initially bind to the TatABC complex, which probably triggers association of the separate TatA complex to form the active translocon. TatC can form a distinct, stable, multimeric complex independent of TatA and TatB. Each of TatA, TatB and TatC are able to interact in pairs without the third partner. Interacts with the signal sequence of DmsA and DmsD.

It is found in the cell inner membrane. Part of the twin-arginine translocation (Tat) system that transports large folded proteins containing a characteristic twin-arginine motif in their signal peptide across membranes. Together with TatB, TatC is part of a receptor directly interacting with Tat signal peptides. This Escherichia coli (strain K12) protein is Sec-independent protein translocase protein TatC.